The chain runs to 588 residues: Polyphenol oxidase II, chloroplastic (588 aa).

A compositionally biased stretch (polar residues) spans 1–10 (MASFTTSPCT). The tract at residues 1-32 (MASFTTSPCTSAAPKTPKSLSSSATISSPLPK) is disordered. Residues 1 to 50 (MASFTTSPCTSAAPKTPKSLSSSATISSPLPKPSQIHIATAKRTHHFKVS) constitute a chloroplast transit peptide. A compositionally biased stretch (low complexity) spans 16-29 (TPKSLSSSATISSP). A thylakoid-targeting transit peptide spans 51-88 (CNAPNGDSQPKLDRRDVLLGLGGLAGAASLINNPLAFA). 2 disulfides stabilise this stretch: Cys99–Cys116 and Cys115–Cys179. Cu cation-binding residues include His178, His199, His208, His330, His334, and His366. The segment at residues 182 to 199 (CNGGYVQTDYPDKEIQVH) is a cross-link (2'-(S-cysteinyl)-histidine (Cys-His)).

This sequence belongs to the tyrosinase family. As to quaternary structure, monomer. It depends on Cu(2+) as a cofactor.

The protein localises to the plastid. It localises to the chloroplast thylakoid lumen. The catalysed reaction is 2 catechol + O2 = 2 1,2-benzoquinone + 2 H2O. Its function is as follows. Catalyzes the oxidation of mono- and o-diphenols to o-diquinones. The protein is Polyphenol oxidase II, chloroplastic (co-2) of Ipomoea batatas (Sweet potato).